We begin with the raw amino-acid sequence, 201 residues long: FMN-dependent NADH:quinone oxidoreductase (201 aa).

FMN is bound by residues Ser10, 16 to 18 (SQS), 96 to 99 (MYNF), and 140 to 143 (SRGG).

It belongs to the azoreductase type 1 family. Homodimer. The cofactor is FMN.

It catalyses the reaction 2 a quinone + NADH + H(+) = 2 a 1,4-benzosemiquinone + NAD(+). The catalysed reaction is N,N-dimethyl-1,4-phenylenediamine + anthranilate + 2 NAD(+) = 2-(4-dimethylaminophenyl)diazenylbenzoate + 2 NADH + 2 H(+). Its function is as follows. Quinone reductase that provides resistance to thiol-specific stress caused by electrophilic quinones. In terms of biological role, also exhibits azoreductase activity. Catalyzes the reductive cleavage of the azo bond in aromatic azo compounds to the corresponding amines. The protein is FMN-dependent NADH:quinone oxidoreductase of Yersinia enterocolitica serotype O:8 / biotype 1B (strain NCTC 13174 / 8081).